Reading from the N-terminus, the 122-residue chain is Large ribosomal subunit protein bL17 (122 aa).

Belongs to the bacterial ribosomal protein bL17 family. Part of the 50S ribosomal subunit. Contacts protein L32.

The chain is Large ribosomal subunit protein bL17 from Neisseria gonorrhoeae (strain ATCC 700825 / FA 1090).